The primary structure comprises 340 residues: Glycerol-3-phosphate dehydrogenase [NAD(P)+] (340 aa).

The NADPH site is built by serine 11, tryptophan 12, arginine 33, and lysine 106. Positions 106, 137, and 139 each coordinate sn-glycerol 3-phosphate. Alanine 141 provides a ligand contact to NADPH. The sn-glycerol 3-phosphate site is built by lysine 192, aspartate 245, serine 255, arginine 256, and asparagine 257. Catalysis depends on lysine 192, which acts as the Proton acceptor. Position 256 (arginine 256) interacts with NADPH. NADPH contacts are provided by valine 280 and glutamate 282.

It belongs to the NAD-dependent glycerol-3-phosphate dehydrogenase family.

The protein localises to the cytoplasm. The catalysed reaction is sn-glycerol 3-phosphate + NAD(+) = dihydroxyacetone phosphate + NADH + H(+). It carries out the reaction sn-glycerol 3-phosphate + NADP(+) = dihydroxyacetone phosphate + NADPH + H(+). The protein operates within membrane lipid metabolism; glycerophospholipid metabolism. Its function is as follows. Catalyzes the reduction of the glycolytic intermediate dihydroxyacetone phosphate (DHAP) to sn-glycerol 3-phosphate (G3P), the key precursor for phospholipid synthesis. The chain is Glycerol-3-phosphate dehydrogenase [NAD(P)+] from Bacillus cereus (strain 03BB102).